The chain runs to 657 residues: Glycogen debranching enzyme (657 aa).

The Nucleophile role is filled by D336. The active-site Proton donor is E371. The segment at 460 to 479 is disordered; the sequence is ANGEENRDGTNNNYSNNHGK.

Belongs to the glycosyl hydrolase 13 family.

It carries out the reaction Hydrolysis of (1-&gt;6)-alpha-D-glucosidic linkages to branches with degrees of polymerization of three or four glucose residues in limit dextrin.. Its pathway is glycan degradation; glycogen degradation. Removes maltotriose and maltotetraose chains that are attached by 1,6-alpha-linkage to the limit dextrin main chain, generating a debranched limit dextrin. The polypeptide is Glycogen debranching enzyme (Shigella flexneri serotype 5b (strain 8401)).